The sequence spans 232 residues: Rho-related GTP-binding protein Rho6 (232 aa).

Residues 23-28, 38-45, 67-71, 125-128, and 169-170 each bind GTP; these read QCGKTA, YPETYVPT, DTSGS, CKTD, and AF. Positions 42–50 match the Effector region motif; that stretch reads YVPTVFENY. Cysteine 229 is subject to Cysteine methyl ester. Cysteine 229 is lipidated: S-geranylgeranyl cysteine. A propeptide spans 230–232 (removed in mature form); the sequence is SIM.

The protein belongs to the small GTPase superfamily. Rho family. In terms of assembly, binds GRB7 and PLXNB1. Interacts with PLXNA2. Interacts with UBXD5.

It localises to the cell membrane. The protein resides in the cytoplasm. Its subcellular location is the cytoskeleton. Its function is as follows. Lacks intrinsic GTPase activity. Has a low affinity for GDP, and constitutively binds GTP. Controls rearrangements of the actin cytoskeleton. Induces the Rac-dependent neuritic process formation in part by disruption of the cortical actin filaments. Causes the formation of many neuritic processes from the cell body with disruption of the cortical actin filaments. This chain is Rho-related GTP-binding protein Rho6 (RND1), found in Bos taurus (Bovine).